Here is a 240-residue protein sequence, read N- to C-terminus: Uridylate kinase (240 aa).

An ATP-binding site is contributed by 14 to 17 (KLSG). Glycine 56 contacts UMP. Residues glycine 57 and arginine 61 each coordinate ATP. UMP is bound by residues aspartate 76 and 137–144 (TGNPFFTT). ATP is bound by residues threonine 164, tyrosine 170, and aspartate 173.

It belongs to the UMP kinase family. As to quaternary structure, homohexamer.

Its subcellular location is the cytoplasm. It carries out the reaction UMP + ATP = UDP + ADP. It functions in the pathway pyrimidine metabolism; CTP biosynthesis via de novo pathway; UDP from UMP (UMPK route): step 1/1. With respect to regulation, inhibited by UTP. Functionally, catalyzes the reversible phosphorylation of UMP to UDP. This Acidovorax sp. (strain JS42) protein is Uridylate kinase.